The chain runs to 382 residues: Probable purine permease 4 (382 aa).

10 helical membrane-spanning segments follow: residues 25–45, 62–82, 98–118, 121–141, 150–170, 185–205, 224–244, 260–280, 291–311, and 315–335; these read LTLL…SSLL, WVQS…HYVL, LIFS…FSWG, YLPV…TLIL, ITFS…LLAL, YFIG…YLPV, LVME…EGGF, TFYW…SFAA, ITGG…GVVA, and VFGG…SSYT. One can recognise an EamA domain in the interval 66–170; it reads AGFPLLLILI…LTLSSVLLAL (105 aa). The interval 345 to 364 is disordered; the sequence is EEKEKGEYSGVKTTEDSGEM.

It belongs to the purine permeases (TC 2.A.7.14) family.

It localises to the membrane. This Arabidopsis thaliana (Mouse-ear cress) protein is Probable purine permease 4 (PUP4).